The sequence spans 156 residues: UPF0225 protein PFLU_1319 (156 aa).

This sequence belongs to the UPF0225 family.

This is UPF0225 protein PFLU_1319 from Pseudomonas fluorescens (strain SBW25).